A 465-amino-acid polypeptide reads, in one-letter code: Probable Xaa-Pro aminopeptidase pepP (465 aa).

Mn(2+)-binding residues include D263, D274, E397, and E437.

Belongs to the peptidase M24B family. Mn(2+) serves as cofactor.

The catalysed reaction is Release of any N-terminal amino acid, including proline, that is linked to proline, even from a dipeptide or tripeptide.. Catalyzes the removal of a penultimate prolyl residue from the N-termini of peptides. In Emericella nidulans (strain FGSC A4 / ATCC 38163 / CBS 112.46 / NRRL 194 / M139) (Aspergillus nidulans), this protein is Probable Xaa-Pro aminopeptidase pepP (pepP).